The following is an 868-amino-acid chain: Hopanoid transporter HpnN (868 aa).

12 consecutive transmembrane segments (helical) span residues 16–36 (FAAFTVLIGVFLAVAAGFYTY), 273–293 (GAVVNGIGTVVVVLLILWMAL), 298–318 (IIFAVAANLVIGLSITTAVGL), 326–346 (LLSIAFAVLFVGLGVDFGIQF), 370–390 (YSAVPLSLAAMSTTAGFLSFL), 403–423 (IAGAGMAIAFFTSITVLPALL), 452–472 (IAIIVGTIGVALAGLPLLYFM), 710–730 (IVASFIQAGLWALLSISILLW), 740–760 (ALTLVPLLVAGAVTLEICVLI), 762–782 (LPLNFANIVALPLLLGVGVAF), 805–825 (AIFFSALTTATAFGSLWLSSH), and 834–854 (LLALSLLTTLGAVLLFQPALM). Positions 299–425 (IFAVAANLVI…ITVLPALLKL (127 aa)) constitute an SSD domain.

This sequence belongs to the resistance-nodulation-cell division (RND) (TC 2.A.6) family. MmpL subfamily.

It localises to the cell inner membrane. Its function is as follows. Essential for hopanoid transport from the cytoplasmic to the outer membrane. Required for the C(35) hopanoid, bacteriohopanetetrol, to remain localized to the mother cell type. This chain is Hopanoid transporter HpnN, found in Rhodopseudomonas palustris (strain TIE-1).